Here is a 320-residue protein sequence, read N- to C-terminus: Cytochrome f (320 aa).

Residues 1–35 form the signal peptide; sequence MQNRNTFSWVKEQMTRSISVSIIIYVITRTSISNA. Residues Tyr36, Cys56, Cys59, and His60 each contribute to the heme site. Residues 286 to 306 form a helical membrane-spanning segment; the sequence is VQGLLFFLASIILAQIFLVLK.

The protein belongs to the cytochrome f family. The 4 large subunits of the cytochrome b6-f complex are cytochrome b6, subunit IV (17 kDa polypeptide, petD), cytochrome f and the Rieske protein, while the 4 small subunits are PetG, PetL, PetM and PetN. The complex functions as a dimer. Heme serves as cofactor.

Its subcellular location is the plastid. The protein localises to the chloroplast thylakoid membrane. Functionally, component of the cytochrome b6-f complex, which mediates electron transfer between photosystem II (PSII) and photosystem I (PSI), cyclic electron flow around PSI, and state transitions. The chain is Cytochrome f from Chloranthus spicatus (Chulantree).